We begin with the raw amino-acid sequence, 535 residues long: Putative beta-glucosidase 41 (535 aa).

A signal peptide spans 1-27 (MESLMRLVLVLFPFFVVFFVPLDHVSS). An a beta-D-glucoside-binding site is contributed by Gln49. Asn118 carries N-linked (GlcNAc...) asparagine glycosylation. Residues His151 and 196-197 (NE) contribute to the a beta-D-glucoside site. The Proton donor role is filled by Glu197. Cysteines 216 and 224 form a disulfide. Tyr340 and Glu413 together coordinate a beta-D-glucoside. Glu413 functions as the Nucleophile in the catalytic mechanism. An N-linked (GlcNAc...) asparagine glycan is attached at Asn445. Residues Trp463, 470 to 471 (EW), and Phe479 contribute to the a beta-D-glucoside site. Asn489 carries N-linked (GlcNAc...) asparagine glycosylation.

The protein belongs to the glycosyl hydrolase 1 family.

The catalysed reaction is Hydrolysis of terminal, non-reducing beta-D-glucosyl residues with release of beta-D-glucose.. This is Putative beta-glucosidase 41 from Arabidopsis thaliana (Mouse-ear cress).